Reading from the N-terminus, the 489-residue chain is Ecdysteroid UDP-glucosyltransferase (489 aa).

A signal peptide spans 1–17 (MVFLIIALTLLATGARA).

The protein belongs to the UDP-glycosyltransferase family.

Functionally, catalyzes the transfer of glucose from UDP-glucose to ecdysteroids which are insect molting hormones. Expression of egt interferes with normal insect development and block molting. The sequence is that of Ecdysteroid UDP-glucosyltransferase (EGT) from Orgyia pseudotsugata (Douglas-fir tussock moth).